The primary structure comprises 488 residues: 3-octaprenyl-4-hydroxybenzoate carboxy-lyase (488 aa).

Position 172 (asparagine 172) interacts with Mn(2+). Prenylated FMN is bound by residues 175–177 (IYR), 189–191 (RWL), and 194–195 (RG). Glutamate 238 contacts Mn(2+). The active-site Proton donor is aspartate 287.

Belongs to the UbiD family. As to quaternary structure, homohexamer. It depends on prenylated FMN as a cofactor. Mn(2+) serves as cofactor.

Its subcellular location is the cell membrane. The catalysed reaction is a 4-hydroxy-3-(all-trans-polyprenyl)benzoate + H(+) = a 2-(all-trans-polyprenyl)phenol + CO2. It functions in the pathway cofactor biosynthesis; ubiquinone biosynthesis. In terms of biological role, catalyzes the decarboxylation of 3-octaprenyl-4-hydroxy benzoate to 2-octaprenylphenol, an intermediate step in ubiquinone biosynthesis. This chain is 3-octaprenyl-4-hydroxybenzoate carboxy-lyase, found in Pseudoalteromonas translucida (strain TAC 125).